Reading from the N-terminus, the 402-residue chain is NADH-quinone oxidoreductase subunit D (402 aa).

It belongs to the complex I 49 kDa subunit family. In terms of assembly, NDH-1 is composed of 14 different subunits. Subunits NuoB, C, D, E, F, and G constitute the peripheral sector of the complex.

It localises to the cell inner membrane. It catalyses the reaction a quinone + NADH + 5 H(+)(in) = a quinol + NAD(+) + 4 H(+)(out). Functionally, NDH-1 shuttles electrons from NADH, via FMN and iron-sulfur (Fe-S) centers, to quinones in the respiratory chain. The immediate electron acceptor for the enzyme in this species is believed to be ubiquinone. Couples the redox reaction to proton translocation (for every two electrons transferred, four hydrogen ions are translocated across the cytoplasmic membrane), and thus conserves the redox energy in a proton gradient. This chain is NADH-quinone oxidoreductase subunit D, found in Protochlamydia amoebophila (strain UWE25).